A 1025-amino-acid polypeptide reads, in one-letter code: Multidrug resistance protein MdtC (1025 aa).

A run of 12 helical transmembrane segments spans residues 15–35, 333–353, 360–380, 387–407, 431–451, 469–489, 528–548, 851–871, 875–895, 897–917, 953–973, and 984–1004; these read ILISLAITLCGILGFRLLPVA, EVEQTLVISVALVILVVFLFL, LIPAVAVPVSLIGTFAAMYLC, LSLMALTIATGFVVDDAIVVL, VGFTVLSMSLSLVAVFLPLLL, VAIGISLAVSLTLTPMMCGWL, LTGLVVLGTIALSVWLYISIP, AQVILILAAIATVYIVLGMLY, VHPLTILSTLPSAGVGALLAL, IFDAPFSLIALIGIMLLIGIV, PIMMTTLAALFGALPLVLSGG, and ITIVGGLVMSQLLTLYTTPVV.

It belongs to the resistance-nodulation-cell division (RND) (TC 2.A.6) family. MdtC subfamily. Part of a tripartite efflux system composed of MdtA, MdtB and MdtC. MdtC forms a heteromultimer with MdtB.

Its subcellular location is the cell inner membrane. The sequence is that of Multidrug resistance protein MdtC from Klebsiella pneumoniae (strain 342).